Here is a 165-residue protein sequence, read N- to C-terminus: Lipoprotein signal peptidase (165 aa).

Transmembrane regions (helical) follow at residues 9-29 (LLTISFFVLIDWVTKLAVLLY), 69-89 (KYFLLLIRIVIILGILAFLFL), and 100-120 (FSLILLCSGAIGNVGDIFFYN). Active-site residues include aspartate 124 and aspartate 142. The chain crosses the membrane as a helical span at residues 133-153 (WSFPTFNFADIFISLGTLIFV).

This sequence belongs to the peptidase A8 family.

Its subcellular location is the cell inner membrane. The enzyme catalyses Release of signal peptides from bacterial membrane prolipoproteins. Hydrolyzes -Xaa-Yaa-Zaa-|-(S,diacylglyceryl)Cys-, in which Xaa is hydrophobic (preferably Leu), and Yaa (Ala or Ser) and Zaa (Gly or Ala) have small, neutral side chains.. The protein operates within protein modification; lipoprotein biosynthesis (signal peptide cleavage). Its function is as follows. This protein specifically catalyzes the removal of signal peptides from prolipoproteins. This chain is Lipoprotein signal peptidase, found in Chlamydia felis (strain Fe/C-56) (Chlamydophila felis).